The chain runs to 248 residues: Non-specific acid phosphatase (248 aa).

The first 20 residues, 1–20, serve as a signal peptide directing secretion; sequence MKKLLAVFCAGAFVSTSVFA.

This sequence belongs to the class A bacterial acid phosphatase family.

Its subcellular location is the periplasm. It catalyses the reaction a phosphate monoester + H2O = an alcohol + phosphate. The protein is Non-specific acid phosphatase (phoN) of Providencia stuartii.